The primary structure comprises 189 residues: Mediator of RNA polymerase II transcription subunit 10b (189 aa).

The disordered stretch occupies residues 1-22; sequence MDPTQNTSAGIGGSNGTIRYQT.

It belongs to the Mediator complex subunit 10 family. Component of the Mediator complex.

It localises to the nucleus. Its function is as follows. Component of the Mediator complex, a coactivator involved in the regulated transcription of nearly all RNA polymerase II-dependent genes. Mediator functions as a bridge to convey information from gene-specific regulatory proteins to the basal RNA polymerase II transcription machinery. The Mediator complex, having a compact conformation in its free form, is recruited to promoters by direct interactions with regulatory proteins and serves for the assembly of a functional preinitiation complex with RNA polymerase II and the general transcription factors. The sequence is that of Mediator of RNA polymerase II transcription subunit 10b (MED10B) from Arabidopsis thaliana (Mouse-ear cress).